A 444-amino-acid chain; its full sequence is Tubulin beta-4A chain (444 aa).

An MREI motif motif is present at residues 1–4; it reads MREI. 6 residues coordinate GTP: glutamine 11, glutamate 69, serine 138, glycine 142, threonine 143, and glycine 144. Residue glutamate 69 coordinates Mg(2+). At serine 172 the chain carries Phosphoserine; by CDK1. Residues asparagine 204 and asparagine 226 each coordinate GTP. The residue at position 436 (glutamate 436) is a 5-glutamyl polyglutamate.

Belongs to the tubulin family. As to quaternary structure, dimer of alpha and beta chains. A typical microtubule is a hollow water-filled tube with an outer diameter of 25 nm and an inner diameter of 15 nM. Alpha-beta heterodimers associate head-to-tail to form protofilaments running lengthwise along the microtubule wall with the beta-tubulin subunit facing the microtubule plus end conferring a structural polarity. Microtubules usually have 13 protofilaments but different protofilament numbers can be found in some organisms and specialized cells. Mg(2+) serves as cofactor. Some glutamate residues at the C-terminus are polyglycylated, resulting in polyglycine chains on the gamma-carboxyl group. Glycylation is mainly limited to tubulin incorporated into axonemes (cilia and flagella) whereas glutamylation is prevalent in neuronal cells, centrioles, axonemes, and the mitotic spindle. Both modifications can coexist on the same protein on adjacent residues, and lowering polyglycylation levels increases polyglutamylation, and reciprocally. Cilia and flagella glycylation is required for their stability and maintenance. Flagella glycylation controls sperm motility. Post-translationally, some glutamate residues at the C-terminus are polyglutamylated, resulting in polyglutamate chains on the gamma-carboxyl group. Polyglutamylation plays a key role in microtubule severing by spastin (SPAST). SPAST preferentially recognizes and acts on microtubules decorated with short polyglutamate tails: severing activity by SPAST increases as the number of glutamates per tubulin rises from one to eight, but decreases beyond this glutamylation threshold. Glutamylation is also involved in cilia motility. In terms of processing, phosphorylated on Ser-172 by CDK1 during the cell cycle, from metaphase to telophase, but not in interphase. This phosphorylation inhibits tubulin incorporation into microtubules.

It is found in the cytoplasm. It localises to the cytoskeleton. In terms of biological role, tubulin is the major constituent of microtubules, a cylinder consisting of laterally associated linear protofilaments composed of alpha- and beta-tubulin heterodimers. Microtubules grow by the addition of GTP-tubulin dimers to the microtubule end, where a stabilizing cap forms. Below the cap, tubulin dimers are in GDP-bound state, owing to GTPase activity of alpha-tubulin. In Bos taurus (Bovine), this protein is Tubulin beta-4A chain (TUBB4A).